A 389-amino-acid chain; its full sequence is Chorismate synthase (389 aa).

Residues R39 and R45 each coordinate NADP(+). FMN-binding positions include 130–132 (RSS), 251–252 (NA), G296, 311–315 (KPIPT), and R338.

Belongs to the chorismate synthase family. As to quaternary structure, homotetramer. It depends on FMNH2 as a cofactor.

The catalysed reaction is 5-O-(1-carboxyvinyl)-3-phosphoshikimate = chorismate + phosphate. It participates in metabolic intermediate biosynthesis; chorismate biosynthesis; chorismate from D-erythrose 4-phosphate and phosphoenolpyruvate: step 7/7. In terms of biological role, catalyzes the anti-1,4-elimination of the C-3 phosphate and the C-6 proR hydrogen from 5-enolpyruvylshikimate-3-phosphate (EPSP) to yield chorismate, which is the branch point compound that serves as the starting substrate for the three terminal pathways of aromatic amino acid biosynthesis. This reaction introduces a second double bond into the aromatic ring system. The chain is Chorismate synthase from Oceanobacillus iheyensis (strain DSM 14371 / CIP 107618 / JCM 11309 / KCTC 3954 / HTE831).